Here is a 159-residue protein sequence, read N- to C-terminus: MSHQFSPEEQAVLRIVQANLPDSLTPYADLAEQAGMTEAQVLELLGRLKASGAIRRFGASIKHQKTGWTHNAMVAWKVTPDQVDDCGRKAAEHSHISHVYYRPSSAPDWPYEMYTMIHGRSEAECLGVVEDVKRTTSLKEHAILRSLKELKKTSMTYFT.

152–157 (KTSMTY) contributes to the substrate binding site.

Belongs to the Ahb/Nir family. In terms of assembly, forms a heterodimer composed of AhbA and AhbB.

The catalysed reaction is siroheme + 2 H(+) = 12,18-didecarboxysiroheme + 2 CO2. The protein operates within porphyrin-containing compound metabolism; protoheme biosynthesis. Involved in siroheme-dependent heme b biosynthesis. Catalyzes the decarboxylation of siroheme into didecarboxysiroheme. Siroheme is decarboxylated to monodecarboxysiroheme, which is in turn decarboxylated to didecarboxysiroheme. In Desulfovibrio desulfuricans (strain ATCC 27774 / DSM 6949 / MB), this protein is Siroheme decarboxylase beta subunit.